A 329-amino-acid polypeptide reads, in one-letter code: MSSAQRVVITPGEPAGIGPDLVVQLAQRAWPIELVVCADGALLTERAAMLGLPLSLLPYSPDVPAAPQPAGTLTLLPVSLRAPAIPGQLTVENGPYVVETLARACDGCLNGEFAALITGPVHKGVINDAGIPFTGHTEFFEERSQAKKVVMMLATEELRVALATTHLPLRAIADAITPALLHEVIAILHHDLRTKFGIAEPRILVCGLNPHAGEGGHMGTEEIDTIIPVLDELRAQGMKLNGPLPADTLFQPKYLDNADAVLAMYHDQGLPVLKYQGFGRGVNITLGLPFIRTSVDHGTALELAGRGKADVGSFITALNLAIKMIVNTQ.

Substrate is bound by residues His136 and Thr137. Residues His166, His211, and His266 each coordinate a divalent metal cation. Substrate-binding residues include Lys274, Asn283, and Arg292.

It belongs to the PdxA family. Homodimer. Zn(2+) is required as a cofactor. Mg(2+) serves as cofactor. Requires Co(2+) as cofactor.

The protein resides in the cytoplasm. It catalyses the reaction 4-(phosphooxy)-L-threonine + NAD(+) = 3-amino-2-oxopropyl phosphate + CO2 + NADH. Its pathway is cofactor biosynthesis; pyridoxine 5'-phosphate biosynthesis; pyridoxine 5'-phosphate from D-erythrose 4-phosphate: step 4/5. Catalyzes the NAD(P)-dependent oxidation of 4-(phosphooxy)-L-threonine (HTP) into 2-amino-3-oxo-4-(phosphooxy)butyric acid which spontaneously decarboxylates to form 3-amino-2-oxopropyl phosphate (AHAP). The chain is 4-hydroxythreonine-4-phosphate dehydrogenase from Salmonella typhi.